Here is a 236-residue protein sequence, read N- to C-terminus: Purine nucleoside phosphorylase DeoD-type (236 aa).

Residue His4 coordinates a purine D-ribonucleoside. Phosphate contacts are provided by residues Gly20, Arg24, Arg43, and 87–90; that span reads RVGT. A purine D-ribonucleoside contacts are provided by residues 179–181 and 203–204; these read EME and SD. Asp204 serves as the catalytic Proton donor.

Belongs to the PNP/UDP phosphorylase family. In terms of assembly, homohexamer; trimer of homodimers.

It carries out the reaction a purine D-ribonucleoside + phosphate = a purine nucleobase + alpha-D-ribose 1-phosphate. The catalysed reaction is a purine 2'-deoxy-D-ribonucleoside + phosphate = a purine nucleobase + 2-deoxy-alpha-D-ribose 1-phosphate. Catalyzes the reversible phosphorolytic breakdown of the N-glycosidic bond in the beta-(deoxy)ribonucleoside molecules, with the formation of the corresponding free purine bases and pentose-1-phosphate. The sequence is that of Purine nucleoside phosphorylase DeoD-type from Streptococcus pneumoniae serotype 2 (strain D39 / NCTC 7466).